Reading from the N-terminus, the 288-residue chain is Bifunctional protein FolD (288 aa).

Residues 166–168 (GAS) and I232 each bind NADP(+).

Belongs to the tetrahydrofolate dehydrogenase/cyclohydrolase family. As to quaternary structure, homodimer.

It carries out the reaction (6R)-5,10-methylene-5,6,7,8-tetrahydrofolate + NADP(+) = (6R)-5,10-methenyltetrahydrofolate + NADPH. The enzyme catalyses (6R)-5,10-methenyltetrahydrofolate + H2O = (6R)-10-formyltetrahydrofolate + H(+). It functions in the pathway one-carbon metabolism; tetrahydrofolate interconversion. In terms of biological role, catalyzes the oxidation of 5,10-methylenetetrahydrofolate to 5,10-methenyltetrahydrofolate and then the hydrolysis of 5,10-methenyltetrahydrofolate to 10-formyltetrahydrofolate. This Erwinia tasmaniensis (strain DSM 17950 / CFBP 7177 / CIP 109463 / NCPPB 4357 / Et1/99) protein is Bifunctional protein FolD.